The chain runs to 574 residues: Septation ring formation regulator EzrA (574 aa).

Topologically, residues 1–7 are extracellular; it reads MSSGIIL. Residues 8 to 26 form a helical membrane-spanning segment; it reads LIVAIVLLVIIAYLIGVII. Residues 27–574 are Cytoplasmic-facing; it reads RKRNDSMIGT…YERTREHIRF (548 aa). Coiled-coil stretches lie at residues 102–140, 243–379, and 459–520; these read NFIRAKHEINNVESQLNLVEEDITSIREALSILKEQEEK, RRLL…GQEI, and QLEA…SFEA.

Belongs to the EzrA family.

The protein localises to the cell membrane. In terms of biological role, negative regulator of FtsZ ring formation; modulates the frequency and position of FtsZ ring formation. Inhibits FtsZ ring formation at polar sites. Interacts either with FtsZ or with one of its binding partners to promote depolymerization. In Streptococcus uberis (strain ATCC BAA-854 / 0140J), this protein is Septation ring formation regulator EzrA.